The sequence spans 108 residues: Cell cycle protein GpsB (108 aa).

A coiled-coil region spans residues 32-69 (LDNVIKDYENFNAQIEALKAENEALKKAKFQARNTVSA).

This sequence belongs to the GpsB family. In terms of assembly, forms polymers through the coiled coil domains. Interacts with PBP1, MreC and EzrA.

It localises to the cytoplasm. In terms of biological role, divisome component that associates with the complex late in its assembly, after the Z-ring is formed, and is dependent on DivIC and PBP2B for its recruitment to the divisome. Together with EzrA, is a key component of the system that regulates PBP1 localization during cell cycle progression. Its main role could be the removal of PBP1 from the cell pole after pole maturation is completed. Also contributes to the recruitment of PBP1 to the division complex. Not essential for septum formation. The protein is Cell cycle protein GpsB of Streptococcus pyogenes serotype M28 (strain MGAS6180).